We begin with the raw amino-acid sequence, 470 residues long: BTB/POZ domain-containing protein 17 (470 aa).

Residues 1 to 18 (MRMKGLYVVPLLLALVES) form the signal peptide. Residues 53 to 122 (SDTTLRIRTA…FYCGEISVNL (70 aa)) form the BTB domain. The BACK domain maps to 161–261 (VVSWYHYALR…ITPSQLFQIQ (101 aa)).

Its subcellular location is the secreted. The polypeptide is BTB/POZ domain-containing protein 17 (btbd17) (Xenopus laevis (African clawed frog)).